The primary structure comprises 333 residues: 6-phosphogluconolactonase (333 aa).

Belongs to the cycloisomerase 2 family.

The catalysed reaction is 6-phospho-D-glucono-1,5-lactone + H2O = 6-phospho-D-gluconate + H(+). It participates in carbohydrate degradation; pentose phosphate pathway; D-ribulose 5-phosphate from D-glucose 6-phosphate (oxidative stage): step 2/3. Functionally, catalyzes the hydrolysis of 6-phosphogluconolactone to 6-phosphogluconate. The polypeptide is 6-phosphogluconolactonase (Cronobacter sakazakii (strain ATCC BAA-894) (Enterobacter sakazakii)).